A 219-amino-acid chain; its full sequence is Leukocyte surface antigen CD53 (219 aa).

Over 1–11 (MGMSSLKLLKY) the chain is Cytoplasmic. A helical transmembrane segment spans residues 12 to 32 (VLFFFNLLFWICGCCILGFGI). The Extracellular portion of the chain corresponds to 33-54 (YLLIHNNFGVLFHNLPSLTLGN). The chain crosses the membrane as a helical span at residues 55–69 (VFVIVGSIIMVVAFL). Over 70–80 (GCMGSIKENKC) the chain is Cytoplasmic. Residues 81–106 (LLMSFFILLLIILLAEVTLAILLFVY) traverse the membrane as a helical segment. The Extracellular segment spans residues 107-181 (EQKLNEYVAK…AKARLWFHSN (75 aa)). Asn129 and Asn148 each carry an N-linked (GlcNAc...) asparagine glycan. The chain crosses the membrane as a helical span at residues 182-206 (FLYIGIITICVCVIEVLGMSFALTL). Residues 207-219 (NCQIDKTSQTIGL) lie on the Cytoplasmic side of the membrane.

This sequence belongs to the tetraspanin (TM4SF) family. Interacts with SCIMP. Interacts with CD45/PTPRC. Interacts with IL7R. Interacts with RBL2 and PPP2CA. B-cells, monocytes, macrophages, neutrophils, single (CD4 or CD8) positive thymocytes and peripheral T-cells.

Its subcellular location is the cell membrane. The protein localises to the cell junction. It is found in the membrane. The protein resides in the synapse. Its function is as follows. Structural component of specialized membrane microdomains known as tetraspanin-enriched microdomains (TERMs), which act as platforms for receptor clustering and signaling. Participates thereby in diverse biological functions such as cell signal transduction, adhesion, migration and protein trafficking. Plays a role in the activation of monocytes and B-cells. Acts as an essential regulator of B-cell development by promoting interleukin-7 receptor/IL7R signaling. Also promotes, in B-cells, the BCR signaling by recruiting PKC to the plasma membrane in order to phosphorylate its substrates. Plays an essential role in B- and T-cells homing to lymph nodes by stabilizing L-selectin/SELL cell surface expression. Also mediates metabolic and inflammatory functions in hepatocytes and adipose tissue by promoting TNF-alpha and LPS signaling independent of the immune compartment. The polypeptide is Leukocyte surface antigen CD53 (CD53) (Homo sapiens (Human)).